A 657-amino-acid polypeptide reads, in one-letter code: Glycogen debranching enzyme (657 aa).

Residue aspartate 336 is the Nucleophile of the active site. The active-site Proton donor is the glutamate 371. The segment covering 458-467 (NEANGEENRD) has biased composition (basic and acidic residues). A disordered region spans residues 458-479 (NEANGEENRDGTNNNYSNNHGK).

It belongs to the glycosyl hydrolase 13 family.

It carries out the reaction Hydrolysis of (1-&gt;6)-alpha-D-glucosidic linkages to branches with degrees of polymerization of three or four glucose residues in limit dextrin.. It participates in glycan degradation; glycogen degradation. Its function is as follows. Removes maltotriose and maltotetraose chains that are attached by 1,6-alpha-linkage to the limit dextrin main chain, generating a debranched limit dextrin. This chain is Glycogen debranching enzyme, found in Escherichia coli (strain 55989 / EAEC).